A 140-amino-acid polypeptide reads, in one-letter code: 3-hydroxyacyl-[acyl-carrier-protein] dehydratase FabZ (140 aa).

H47 is a catalytic residue.

Belongs to the thioester dehydratase family. FabZ subfamily.

It is found in the cytoplasm. The catalysed reaction is a (3R)-hydroxyacyl-[ACP] = a (2E)-enoyl-[ACP] + H2O. In terms of biological role, involved in unsaturated fatty acids biosynthesis. Catalyzes the dehydration of short chain beta-hydroxyacyl-ACPs and long chain saturated and unsaturated beta-hydroxyacyl-ACPs. This is 3-hydroxyacyl-[acyl-carrier-protein] dehydratase FabZ from Streptococcus pneumoniae serotype 2 (strain D39 / NCTC 7466).